Here is a 323-residue protein sequence, read N- to C-terminus: MDRRNPFQHHHHHHQLHHHLIQQQQLPPPPLSTTATMDPGGGGGGGERIPQWSIEETKELLAIREELDQTFMETKRNKLLWEVVAAKMADKGFVRSAEQCKSKWKNLVTRYKACETTEPDAIRQQFPFYNEIQSIFEARMQRMLWSEATEPSTSSKRKHHQFSSDDEEEEVDEPNQDINEELLSLVETQKRETEVITTSTSTNPRKRAKKGKGVASGTKAETAGNTLKDILEEFMRQTVKMEKEWRDAWEMKEIEREKREKEWRRRMAELEEERAATERRWMEREEERRLREEARAQKRDSLIDALLNRLNRDHNDDHHNQGF.

A compositionally biased stretch (basic residues) spans Met-1–Leu-20. Residues Met-1–Gln-51 are disordered. Residues Trp-52–Val-108 enclose the Myb-like domain. 3 disordered regions span residues Glu-147–Gln-176, Lys-190–Ala-220, and Glu-269–Gln-297. A compositionally biased stretch (acidic residues) spans Ser-164–Gln-176.

In terms of assembly, homodimer. Heterodimer with GT-3B. In terms of tissue distribution, predominantly expressed in roots and flower buds.

It localises to the nucleus. Its function is as follows. Probable transcription factor that binds specifically to the core DNA sequence 5'-GTTAC-3'. This chain is Trihelix transcription factor GT-3a (GT-3A), found in Arabidopsis thaliana (Mouse-ear cress).